The following is a 135-amino-acid chain: Large ribosomal subunit protein uL16c (135 aa).

It belongs to the universal ribosomal protein uL16 family. In terms of assembly, part of the 50S ribosomal subunit.

Its subcellular location is the plastid. It is found in the chloroplast. The sequence is that of Large ribosomal subunit protein uL16c from Populus alba (White poplar).